We begin with the raw amino-acid sequence, 468 residues long: MGTVHARSLDPLPMNGPDFGSPDDADLVEVEPQKKQEILENKDVVVQRVHFEGLGRTKDDLVAHEIGQVFKAKNLIEVMRKSHEAREKLLRLGVFRNVEVLIDTCEGEDAVPNGLDVTFEVTELRRVTGSYNTMVGNNEGSMVLGLKLPNLFGRAEKMTFQFSYGTKETSYGLSFFKPQVGNFERNFSVNLYKVTGQFPWSSLRETDRGVSAEINFPIWKTSHTLKWEGVWRELGCLARTASFTIREESGHTLKSSLSHSMVIDSRNASILPKSGALLKINQELAGYTGGDVSFLKEDFELQLNRQLTWDSVLSTSLWGGMLVPIGDRPSSIADRFYLGGPTSVRGFSMYSIGPQSEGDYLGGEAYWAGGVHLYTPLPFRPGRGGFGDLFRTHFFLNAGNLCNLNYGEGPGAHLRRLAECIRWSYGAGLVLRLGNIARLELNYCIPMGVQSGDRICDGVQFGAGIRFL.

Positions 1–24 (MGTVHARSLDPLPMNGPDFGSPDD) are disordered. One can recognise a POTRA domain in the interval 44-124 (VVVQRVHFEG…LDVTFEVTEL (81 aa)).

Belongs to the SAM50/omp85 family. In terms of assembly, associates with the mitochondrial contact site and cristae organizing system (MICOS) complex (also known as MINOS or MitOS complex).

It is found in the mitochondrion outer membrane. Functionally, may play a role in the maintenance of the structure of mitochondrial cristae. The sequence is that of Sorting and assembly machinery component 50 homolog A (samm50-a) from Xenopus laevis (African clawed frog).